The sequence spans 680 residues: Calcium-binding and coiled-coil domain-containing protein 1 (680 aa).

The p300 KIX-binding stretch occupies residues 1 to 30; sequence MEESSLSRAPSRGGVNFLNVARTYIPNTKV. The segment at 1 to 190 is N-terminal AD (CTNNB1 binding site); it reads MEESSLSRAP…VQELEKALAA (190 aa). Position 4 is a phosphoserine (Ser4). Residues 45–125 form an interaction with GATA1 region; sequence SDWIGIFKVE…FQFREPRPMD (81 aa). 3 coiled-coil regions span residues 145 to 205, 232 to 339, and 417 to 514; these read KATV…YKGL, ELEE…AELE, and QSVE…ADEK. The tract at residues 501–680 is C-terminal AD (CTNNB1 binding site); interaction with CCAR1; it reads RKLEARLEKV…HTYTHTHTHA (180 aa). The tract at residues 511–606 is disordered; the sequence is ADEKWSEDPA…DSEAEDEKSV (96 aa). Residues 654 to 679 form a UBZ1-type zinc finger; the sequence is WKECPICKERFPVHTQTHTYTHTHTH. Positions 657, 660, 675, and 679 each coordinate Zn(2+).

This sequence belongs to the CALCOCO family. As to quaternary structure, part of a calphoglin complex consisting of CALCOCO1, PPA1 and PGM. Interacts with the bHLH-PAS domains of GRIP1, AHR and ARNT. Interacts with CTNNB1 via both its N- and C-terminal regions. Interacts with EP300. Interacts with CCAR1 (via N-terminus) and GATA1.

Its subcellular location is the cytoplasm. It localises to the nucleus. Functions as a coactivator for aryl hydrocarbon and nuclear receptors (NR). Recruited to promoters through its contact with the N-terminal basic helix-loop-helix-Per-Arnt-Sim (PAS) domain of transcription factors or coactivators, such as NCOA2. During ER-activation acts synergistically in combination with other NCOA2-binding proteins, such as EP300, CREBBP and CARM1. Involved in the transcriptional activation of target genes in the Wnt/CTNNB1 pathway. Functions as a secondary coactivator in LEF1-mediated transcriptional activation via its interaction with CTNNB1. Coactivator function for nuclear receptors and LEF1/CTNNB1 involves differential utilization of two different activation regions. In association with CCAR1 enhances GATA1- and MED1-mediated transcriptional activation from the gamma-globin promoter during erythroid differentiation of K562 erythroleukemia cells. Its function is as follows. Seems to enhance inorganic pyrophosphatase thus activating phosphogluomutase (PMG). Probably functions as a component of the calphoglin complex, which is involved in linking cellular metabolism (phosphate and glucose metabolism) with other core functions including protein synthesis and degradation, calcium signaling and cell growth. The chain is Calcium-binding and coiled-coil domain-containing protein 1 (CALCOCO1) from Bos taurus (Bovine).